Here is a 152-residue protein sequence, read N- to C-terminus: Pseudo histidine-containing phosphotransfer protein 5 (152 aa).

The 103-residue stretch at 38 to 140 (NPNFAEEVVS…ESYFQLLRQA (103 aa)) folds into the HPt domain.

Functionally, functions as a two-component phosphorelay mediator between cytokinin sensor histidine kinases and response regulators (B-type ARRs). Plays an important role in propagating cytokinin signal transduction. The polypeptide is Pseudo histidine-containing phosphotransfer protein 5 (Oryza sativa subsp. japonica (Rice)).